The following is a 956-amino-acid chain: Calsyntenin-3 (956 aa).

The first 19 residues, 1–19, serve as a signal peptide directing secretion; that stretch reads MTLLLVSLLLASLLQISSG. Residues 1-21 are Cytoplasmic-facing; that stretch reads MTLLLVSLLLASLLQISSGNK. Topologically, residues 20–847 are extracellular; it reads NKANKHKPWI…SHRNSMVPSA (828 aa). An intramembrane region (helical) is located at residues 22–42; sequence ANKHKPWIEAEYQGIVMENDN. Cadherin domains lie at 29-145 and 146-246; these read IEAE…APVF and VERL…KPSW. Residues 43–73 lie on the Cytoplasmic side of the membrane; it reads TVLLNPPLFALDKDAPLRYAGEICGFRLHGS. The helical intramembrane region spans 74–94; sequence GVPFEAVILDKATGEGLIRAK. The Cytoplasmic segment spans residues 95–139; it reads EPVDCEAQKEHTFTIQAYDCGEGPDGTNTKKSHKATVHVRVNDVN. Residues 140–160 constitute an intramembrane region (helical); it reads EFAPVFVERLYRAAVTEGKLY. At 161 to 248 the chain is on the cytoplasmic side; that stretch reads DRILRVEAID…KPTCKPSWQG (88 aa). Residues 249–269 traverse the membrane as a helical segment; that stretch reads WNKRIEYAPGAGSLALFPGIR. Topologically, residues 270-357 are lumenal; it reads LETCDEPLWN…GTQAVQVPLG (88 aa). 5 N-linked (GlcNAc...) asparagine glycosylation sites follow: N299, N327, N347, N507, and N740. A helical membrane pass occupies residues 848–868; sequence ATLIIVVCVGFLVLMVILGLV. Residues 869 to 956 lie on the Cytoplasmic side of the membrane; the sequence is RIHSLHRRVS…RIIESPPHRY (88 aa). The interval 916–956 is disordered; it reads QTCVAGVAGGQQEEEDSSDSEAADSPSSDERRIIESPPHRY. Over residues 927–937 the composition is skewed to acidic residues; it reads QEEEDSSDSEA. Basic and acidic residues predominate over residues 943 to 956; sequence SDERRIIESPPHRY.

It belongs to the calsyntenin family. As to quaternary structure, interacts (via cadherin domains) with both alpha and beta isoforms of neurexins (NRXN1, NRXN2 and NRXN3). Directly interacts with APBA2. Forms a tripartite complex with APBA2 and APP. Interacts with low affinity with KLC1. Interacts with SLC23A2/SVCT2. Interacts with CIDEA; inhibiting the lipid transferase activity of CIDEA. Interacts with CIDEC; inhibiting the lipid transferase activity of CIDEC. Post-translationally, proteolytically processed under normal cellular conditions. A primary zeta-cleavage generates a large extracellular (soluble) N-terminal domain (sAlc) and a short C-terminal transmembrane fragment (CTF1). A secondary cleavage catalyzed by gamma-secretase within the transmembrane domain releases the beta-Alc-beta chain in the extracellular milieu and produces an intracellular fragment (AlcICD). This processing is strongly suppressed in the tripartite complex formed with APBA2 and APP, which seems to prevent the association with gamma-secretase. In terms of processing, ubiquitinated: endoplasmic reticulum-localized protein is ubiquitinated and degraded by the endoplasmic reticulum-associated degradation (ERAD) pathway. As to expression, restricted to the brain (at protein level). In the cerebral cortex, found in the somas and neuropil of all layers. Expressed at highest levels in neurons of cortical layer 5 and, at lower levels, in neurons of the upper layers. Highly expressed in Purkinje cells. Also found in a few scattered interneurons throughout the granule cell layer and occasionally in neurons in the molecular layer (at protein level). In all layers, high levels in a subpopulation of presumptive GABAergic neurons (based on morphology). Expression is restricted to adipose tissue, with high expression in thermogenic adipocytes (brown adipose tissue).

The protein resides in the postsynaptic cell membrane. It is found in the endoplasmic reticulum membrane. The protein localises to the golgi apparatus membrane. It localises to the cell projection. Its subcellular location is the dendrite. The protein resides in the lipid droplet. Its function is as follows. Postsynaptic adhesion molecule that binds to presynaptic neurexins to mediate both excitatory and inhibitory synapse formation. Promotes synapse development by acting as a cell adhesion molecule at the postsynaptic membrane, which associates with both neurexin-alpha and neurexin-beta proteins at the presynaptic membrane. Regulates the balance between excitatory and inhibitory synapses by inhibiting formation of excitatory parallel-fiber synapses and promoting formation of inhibitory synapses in the same neuron. May also be involved in ascorbate (vitamin C) uptake via its interaction with SLC23A2/SVCT2. Complex formation with APBA2 and APP, stabilizes APP metabolism and enhances APBA2-mediated suppression of beta-APP40 secretion, due to the retardation of intracellular APP maturation. Adipose-specific isoform that plays a key role in adaptive thermogenesis. Facilitates the efficient use of stored triglyceride by promoting multilocular morphology of thermogenic adipocytes: acts by inhibiting the activity of CIDEA and CIDEC on lipid droplets, thereby preventing lipid droplet fusion and facilitating lipid utilization. May also participate in adaptive thermogenesis by promoting sympathetic innervation of thermogenic adipose tissue: acts by driving secretion of neurotrophic factor S100B from brown adipocytes, stimulating neurite outgrowth from sympathetic neurons. This is Calsyntenin-3 from Mus musculus (Mouse).